The following is a 193-amino-acid chain: Potassium-transporting ATPase KdpC subunit (193 aa).

Residues 14 to 34 traverse the membrane as a helical segment; that stretch reads ITFTFLVLCGLVYPLIVTGIA.

The protein belongs to the KdpC family. As to quaternary structure, the system is composed of three essential subunits: KdpA, KdpB and KdpC.

The protein localises to the cell membrane. Its function is as follows. Part of the high-affinity ATP-driven potassium transport (or Kdp) system, which catalyzes the hydrolysis of ATP coupled with the electrogenic transport of potassium into the cytoplasm. This subunit acts as a catalytic chaperone that increases the ATP-binding affinity of the ATP-hydrolyzing subunit KdpB by the formation of a transient KdpB/KdpC/ATP ternary complex. In Bacillus cereus (strain ATCC 10987 / NRS 248), this protein is Potassium-transporting ATPase KdpC subunit.